Reading from the N-terminus, the 250-residue chain is 5-oxoprolinase subunit A (250 aa).

The protein belongs to the LamB/PxpA family. Forms a complex composed of PxpA, PxpB and PxpC.

The enzyme catalyses 5-oxo-L-proline + ATP + 2 H2O = L-glutamate + ADP + phosphate + H(+). Catalyzes the cleavage of 5-oxoproline to form L-glutamate coupled to the hydrolysis of ATP to ADP and inorganic phosphate. The chain is 5-oxoprolinase subunit A from Streptomyces avermitilis (strain ATCC 31267 / DSM 46492 / JCM 5070 / NBRC 14893 / NCIMB 12804 / NRRL 8165 / MA-4680).